The primary structure comprises 217 residues: Protein-L-isoaspartate O-methyltransferase (217 aa).

Ser61 is a catalytic residue.

The protein belongs to the methyltransferase superfamily. L-isoaspartyl/D-aspartyl protein methyltransferase family.

The protein localises to the cytoplasm. The catalysed reaction is [protein]-L-isoaspartate + S-adenosyl-L-methionine = [protein]-L-isoaspartate alpha-methyl ester + S-adenosyl-L-homocysteine. In terms of biological role, catalyzes the methyl esterification of L-isoaspartyl residues in peptides and proteins that result from spontaneous decomposition of normal L-aspartyl and L-asparaginyl residues. It plays a role in the repair and/or degradation of damaged proteins. This is Protein-L-isoaspartate O-methyltransferase from Syntrophotalea carbinolica (strain DSM 2380 / NBRC 103641 / GraBd1) (Pelobacter carbinolicus).